Reading from the N-terminus, the 202-residue chain is Holliday junction branch migration complex subunit RuvA (202 aa).

Residues 1 to 64 (MIGRLRGSLA…EDAHLLYGFY (64 aa)) form a domain I region. Residues 65–143 (EKRERELFRE…AWEALPGTFT (79 aa)) form a domain II region. A flexible linker region spans residues 144 to 153 (LVSNGPNQAE). Positions 154–202 (PVASAESDAVSALISLGYKPQEASKAVSAIKEKDLSSADLIRRALKGMG) are domain III.

It belongs to the RuvA family. In terms of assembly, homotetramer. Forms an RuvA(8)-RuvB(12)-Holliday junction (HJ) complex. HJ DNA is sandwiched between 2 RuvA tetramers; dsDNA enters through RuvA and exits via RuvB. An RuvB hexamer assembles on each DNA strand where it exits the tetramer. Each RuvB hexamer is contacted by two RuvA subunits (via domain III) on 2 adjacent RuvB subunits; this complex drives branch migration. In the full resolvosome a probable DNA-RuvA(4)-RuvB(12)-RuvC(2) complex forms which resolves the HJ.

The protein resides in the cytoplasm. The RuvA-RuvB-RuvC complex processes Holliday junction (HJ) DNA during genetic recombination and DNA repair, while the RuvA-RuvB complex plays an important role in the rescue of blocked DNA replication forks via replication fork reversal (RFR). RuvA specifically binds to HJ cruciform DNA, conferring on it an open structure. The RuvB hexamer acts as an ATP-dependent pump, pulling dsDNA into and through the RuvAB complex. HJ branch migration allows RuvC to scan DNA until it finds its consensus sequence, where it cleaves and resolves the cruciform DNA. The chain is Holliday junction branch migration complex subunit RuvA from Pseudomonas syringae pv. syringae (strain B728a).